A 292-amino-acid chain; its full sequence is E3 ubiquitin-protein ligase trim-21 (292 aa).

An RING-type zinc finger spans residues 6-52 (CEICDDDFSSEEDGDHNPRNLKCSHTLCEGCIKKLLKNGRVVCPFCR). The B box-type zinc finger occupies 90-137 (NFPPKCVEHPYNVAEFACIESNCSSKNKLMCQTCEEFGAHKGHAKELL). Residues cysteine 95, histidine 98, cysteine 123, and histidine 129 each coordinate Zn(2+). The stretch at 152–179 (INQLKLNIQNCTVKKNELEEAVVKSEQL) forms a coiled coil.

This sequence belongs to the TRIM/RBCC family. Interacts with E2 ubiquitin-conjugating enzyme ubc-21. Interacts with ced-6; this mediates interaction of trim-21 with ced-1 and is required for ced-1 ubiquitination. Interacts with nck-1; the interaction is required for ced-1 ubiquitination. In terms of tissue distribution, in early larva, observed mainly in pharyngeal and body wall muscle cells.

It is found in the cytoplasm. It catalyses the reaction S-ubiquitinyl-[E2 ubiquitin-conjugating enzyme]-L-cysteine + [acceptor protein]-L-lysine = [E2 ubiquitin-conjugating enzyme]-L-cysteine + N(6)-ubiquitinyl-[acceptor protein]-L-lysine.. It functions in the pathway protein modification; protein ubiquitination. Functionally, E3 ubiquitin-protein ligase which catalyzes 'Lys-48'-linked polyubiquitination of ced-1, promoting its proteasomal degradation to maintain appropriate ced-1 levels for apoptotic cell clearance. Acts together with E2 ubiquitin-conjugating enzyme ubc-21. The protein is E3 ubiquitin-protein ligase trim-21 of Caenorhabditis elegans.